The following is a 62-amino-acid chain: MTTVTPELLTVPEVMARLKVGRSKVYDLIRTRRLASIKIDGARRVPTDAVRDFIQDQLGEAI.

The polypeptide is Excisionase (xis) (Streptomyces ambofaciens).